Reading from the N-terminus, the 366-residue chain is Subtilisin-like protease het-Q2 (366 aa).

The region spanning 1–321 is the Peptidase S8 domain; sequence MSAISHHSLS…RVLMALGEKT (321 aa). The Charge relay system role is filled by Asp-35. Positions 79-98 are disordered; sequence DFCQPSPPGDRQGPPPQPHS. A compositionally biased stretch (pro residues) spans 83–96; that stretch reads PSPPGDRQGPPPQP. Residues His-105 and Ser-266 each act as charge relay system in the active site. A helical transmembrane segment spans residues 261–283; sequence LVSGSSFATPVVVSVAALVLAFV.

The protein belongs to the peptidase S8 family.

The protein localises to the membrane. In terms of biological role, serine protease involved in heterokaryon incompatibility, a process that ensures that during spontaneous vegetative cell fusion, only compatible cells from the same colony survive (non-self-recognition). In P.anserina, the het-q locus exists as 2 incompatible alleles, het-Q1 (AC B2AXJ5) and het-Q2 (this entry). Prevents cell fusion with strains containing the gasdermin-like protein het-Q1 by mediating proteolytic cleavage and maturation of het-Q1 during the allorecognition process, thereby triggering cell death. In Podospora anserina (Pleurage anserina), this protein is Subtilisin-like protease het-Q2.